The chain runs to 246 residues: tRNA (guanine-N(1)-)-methyltransferase (246 aa).

S-adenosyl-L-methionine contacts are provided by residues glycine 112 and 131 to 136 (IGDYVL).

Belongs to the RNA methyltransferase TrmD family. In terms of assembly, homodimer.

It localises to the cytoplasm. It catalyses the reaction guanosine(37) in tRNA + S-adenosyl-L-methionine = N(1)-methylguanosine(37) in tRNA + S-adenosyl-L-homocysteine + H(+). Its function is as follows. Specifically methylates guanosine-37 in various tRNAs. This Fervidobacterium nodosum (strain ATCC 35602 / DSM 5306 / Rt17-B1) protein is tRNA (guanine-N(1)-)-methyltransferase.